We begin with the raw amino-acid sequence, 416 residues long: Phosphoglycerate kinase (416 aa).

(2R)-3-phosphoglycerate is bound by residues Val23, Asp24, Phe25, Asn26, Gln38, Arg39, Ser62, His63, Gly65, Arg66, Leu121, Arg122, His168, and Arg169. Gly212 contacts ADP. Residue Gly212 participates in CDP binding. AMP is bound by residues Ala213 and Lys214. Ala213 contributes to the ATP binding site. Position 213 (Ala213) interacts with Mg(2+). Positions 216 and 217 each coordinate Mg(2+). Asp217 lines the CDP pocket. Lys218 is a binding site for AMP. Lys218 serves as a coordination point for ATP. Gly236 lines the ADP pocket. Gly236 contributes to the CDP binding site. Gly237 and Gly311 together coordinate AMP. ATP-binding residues include Gly237 and Gly311. CDP is bound by residues Gly336 and Phe341. Phe341 contacts ADP. AMP is bound at residue Glu342. The ATP site is built by Glu342, Asp373, and Thr374. Residue Asp373 participates in Mg(2+) binding.

It belongs to the phosphoglycerate kinase family. As to quaternary structure, monomer. Requires Mg(2+) as cofactor.

It localises to the cytoplasm. The protein resides in the mitochondrion. It carries out the reaction (2R)-3-phosphoglycerate + ATP = (2R)-3-phospho-glyceroyl phosphate + ADP. The protein operates within carbohydrate degradation; glycolysis; pyruvate from D-glyceraldehyde 3-phosphate: step 2/5. Catalyzes one of the two ATP producing reactions in the glycolytic pathway via the reversible conversion of 1,3-diphosphoglycerate to 3-phosphoglycerate. Both L- and D- forms of purine and pyrimidine nucleotides can be used as substrates, but the activity is much lower on pyrimidines. Negatively regulates the biosynthesis of acetyl-CoA from pyruvate in the mitochondrion. In Eremothecium gossypii (strain ATCC 10895 / CBS 109.51 / FGSC 9923 / NRRL Y-1056) (Yeast), this protein is Phosphoglycerate kinase (PGK1).